Consider the following 710-residue polypeptide: Early transcription factor 82 kDa subunit (710 aa).

The protein belongs to the poxviridae VETF large subunit family. In terms of assembly, heterodimer of a 70 kDa and a 82 kDa subunit. Part of the early transcription complex composed of ETF, RAP94/OPG109, and the DNA-directed RNA polymerase.

It localises to the virion. Acts with RNA polymerase to initiate transcription from early gene promoters. Is recruited by the RPO-associated protein of 94 kDa RAP94/OPG109 to form the early transcription complex, which also contains the core RNA polymerase. ETF heterodimer binds to early gene promoters. In Homo sapiens (Human), this protein is Early transcription factor 82 kDa subunit (OPG133).